The chain runs to 335 residues: Adenosine deaminase (335 aa).

Zn(2+) contacts are provided by H12 and H14. Residues H14 and D16 each coordinate substrate. H197 provides a ligand contact to Zn(2+). Catalysis depends on E200, which acts as the Proton donor. Residue D278 participates in Zn(2+) binding.

The protein belongs to the metallo-dependent hydrolases superfamily. Adenosine and AMP deaminases family. Adenosine deaminase subfamily. The cofactor is Zn(2+).

The enzyme catalyses adenosine + H2O + H(+) = inosine + NH4(+). It catalyses the reaction 2'-deoxyadenosine + H2O + H(+) = 2'-deoxyinosine + NH4(+). Functionally, catalyzes the hydrolytic deamination of adenosine and 2-deoxyadenosine. The protein is Adenosine deaminase of Clostridium botulinum (strain Langeland / NCTC 10281 / Type F).